Here is a 336-residue protein sequence, read N- to C-terminus: N-acetyl-gamma-glutamyl-phosphate reductase (336 aa).

The active site involves C148.

It belongs to the NAGSA dehydrogenase family. Type 1 subfamily.

It localises to the cytoplasm. The catalysed reaction is N-acetyl-L-glutamate 5-semialdehyde + phosphate + NADP(+) = N-acetyl-L-glutamyl 5-phosphate + NADPH + H(+). The protein operates within amino-acid biosynthesis; L-arginine biosynthesis; N(2)-acetyl-L-ornithine from L-glutamate: step 3/4. Catalyzes the NADPH-dependent reduction of N-acetyl-5-glutamyl phosphate to yield N-acetyl-L-glutamate 5-semialdehyde. The chain is N-acetyl-gamma-glutamyl-phosphate reductase from Campylobacter curvus (strain 525.92).